The chain runs to 326 residues: N-acetyl-gamma-glutamyl-phosphate reductase (326 aa).

The active site involves Cys-155.

It belongs to the NAGSA dehydrogenase family. Type 1 subfamily.

The protein resides in the cytoplasm. The catalysed reaction is N-acetyl-L-glutamate 5-semialdehyde + phosphate + NADP(+) = N-acetyl-L-glutamyl 5-phosphate + NADPH + H(+). The protein operates within amino-acid biosynthesis; L-arginine biosynthesis; N(2)-acetyl-L-ornithine from L-glutamate: step 3/4. In terms of biological role, catalyzes the NADPH-dependent reduction of N-acetyl-5-glutamyl phosphate to yield N-acetyl-L-glutamate 5-semialdehyde. This chain is N-acetyl-gamma-glutamyl-phosphate reductase, found in Shewanella loihica (strain ATCC BAA-1088 / PV-4).